A 207-amino-acid chain; its full sequence is Guanylate kinase (207 aa).

Residues 4-184 form the Guanylate kinase-like domain; sequence GILFIISAPS…AVNDLITIIT (181 aa). 11 to 18 provides a ligand contact to ATP; the sequence is APSGTGKS.

The protein belongs to the guanylate kinase family.

Its subcellular location is the cytoplasm. It carries out the reaction GMP + ATP = GDP + ADP. Functionally, essential for recycling GMP and indirectly, cGMP. In Buchnera aphidicola subsp. Acyrthosiphon pisum (strain APS) (Acyrthosiphon pisum symbiotic bacterium), this protein is Guanylate kinase (gmk).